The sequence spans 436 residues: Autophagy-related protein 18 (436 aa).

WD repeat units lie at residues 192–232 (AHRS…KLYQ), 237–276 (SMPSRIFSMSFNTTSTLLCVSSSTETIHLFKLSHPTSSPD), and 374–414 (GNNG…GGEG). Residues 233–237 (FRRGS) carry the L/FRRG motif motif. Positions 268–315 (LSHPTSSPDTSPSSPVGRDRSLSQSSSGYSPDRGDLTGDVGSSDFPAR) are disordered. The segment covering 269-282 (SHPTSSPDTSPSSP) has biased composition (low complexity).

The protein belongs to the WD repeat PROPPIN family. In terms of assembly, component of the PI(3,5)P2 regulatory complex.

It is found in the preautophagosomal structure membrane. Its subcellular location is the vacuole membrane. The protein localises to the endosome membrane. In terms of biological role, the PI(3,5)P2 regulatory complex regulates both the synthesis and turnover of phosphatidylinositol 3,5-bisphosphate (PtdIns(3,5)P2). Necessary for proper vacuole morphology. Plays an important role in osmotically-induced vacuole fragmentation. Required for cytoplasm to vacuole transport (Cvt) vesicle formation, pexophagy and starvation-induced autophagy. Involved in correct atg9 trafficking to the pre-autophagosomal structure. Might also be involved in premeiotic DNA replication. The chain is Autophagy-related protein 18 (atg18) from Aspergillus fumigatus (strain ATCC MYA-4609 / CBS 101355 / FGSC A1100 / Af293) (Neosartorya fumigata).